The following is a 256-amino-acid chain: 5-oxoprolinase subunit A (256 aa).

The protein belongs to the LamB/PxpA family. As to quaternary structure, forms a complex composed of PxpA, PxpB and PxpC.

It catalyses the reaction 5-oxo-L-proline + ATP + 2 H2O = L-glutamate + ADP + phosphate + H(+). Catalyzes the cleavage of 5-oxoproline to form L-glutamate coupled to the hydrolysis of ATP to ADP and inorganic phosphate. The protein is 5-oxoprolinase subunit A of Geobacillus kaustophilus (strain HTA426).